The primary structure comprises 108 residues: Small ribosomal subunit protein bS6 (108 aa).

Belongs to the bacterial ribosomal protein bS6 family.

In terms of biological role, binds together with bS18 to 16S ribosomal RNA. This chain is Small ribosomal subunit protein bS6, found in Nostoc sp. (strain PCC 7120 / SAG 25.82 / UTEX 2576).